A 107-amino-acid chain; its full sequence is Large ribosomal subunit protein uL23 (107 aa).

Belongs to the universal ribosomal protein uL23 family. As to quaternary structure, part of the 50S ribosomal subunit. Contacts protein L29, and trigger factor when it is bound to the ribosome.

In terms of biological role, one of the early assembly proteins it binds 23S rRNA. One of the proteins that surrounds the polypeptide exit tunnel on the outside of the ribosome. Forms the main docking site for trigger factor binding to the ribosome. This chain is Large ribosomal subunit protein uL23, found in Gluconobacter oxydans (strain 621H) (Gluconobacter suboxydans).